A 467-amino-acid chain; its full sequence is Protein PHOSPHATE STARVATION RESPONSE 3 (467 aa).

Residues M227–P266 form a disordered region. Positions S262–Y322 constitute an HTH myb-type domain. The segment at residues P293–R318 is a DNA-binding region (H-T-H motif). Over residues K327 to T337 the composition is skewed to basic and acidic residues. Disordered regions lie at residues K327–Q353 and R400–E467. The span at S402 to G412 shows a compositional bias: polar residues. Basic and acidic residues-rich tracts occupy residues P419–E428 and R438–E467.

Expressed in the root cap and in the exodermis of the root, in the root tip of lateral roots, in the mesophyll cells of the leaf, in pollen, vascular cylinder of the anther and the veins of the lemma, palea and pistils, and in the xylem and phloem regions of large vascular bundles, small vascular bundles and diffuse vascular bundles in node I.

The protein resides in the nucleus. In terms of biological role, transcription factor involved in phosphate starvation signaling. Binds to P1BS, an imperfect palindromic sequence 5'-GNATATNC-3', to promote the expression of inorganic phosphate (Pi) starvation-responsive genes. Functionally redundant with PHR1 and PHR2 in regulating Pi starvation response and Pi homeostasis. The polypeptide is Protein PHOSPHATE STARVATION RESPONSE 3 (Oryza sativa subsp. japonica (Rice)).